Consider the following 101-residue polypeptide: NAD(P)H-quinone oxidoreductase subunit 4L, chloroplastic (101 aa).

3 consecutive transmembrane segments (helical) span residues 2–22 (MLEHVLVLSAYLFSVGLYGLI), 32–52 (MCLELILNAVNINFVTFSDFF), and 61–81 (IFSIFVIAIAAAEAAIGLAIV).

It belongs to the complex I subunit 4L family. As to quaternary structure, NDH is composed of at least 16 different subunits, 5 of which are encoded in the nucleus.

It localises to the plastid. It is found in the chloroplast thylakoid membrane. It catalyses the reaction a plastoquinone + NADH + (n+1) H(+)(in) = a plastoquinol + NAD(+) + n H(+)(out). The enzyme catalyses a plastoquinone + NADPH + (n+1) H(+)(in) = a plastoquinol + NADP(+) + n H(+)(out). In terms of biological role, NDH shuttles electrons from NAD(P)H:plastoquinone, via FMN and iron-sulfur (Fe-S) centers, to quinones in the photosynthetic chain and possibly in a chloroplast respiratory chain. The immediate electron acceptor for the enzyme in this species is believed to be plastoquinone. Couples the redox reaction to proton translocation, and thus conserves the redox energy in a proton gradient. In Panax ginseng (Korean ginseng), this protein is NAD(P)H-quinone oxidoreductase subunit 4L, chloroplastic.